The following is a 75-amino-acid chain: UPF0270 protein Avin_35000 (75 aa).

It belongs to the UPF0270 family.

The chain is UPF0270 protein Avin_35000 from Azotobacter vinelandii (strain DJ / ATCC BAA-1303).